A 201-amino-acid polypeptide reads, in one-letter code: Adapter protein MecA 1 (201 aa).

This sequence belongs to the MecA family. Homodimer.

Enables the recognition and targeting of unfolded and aggregated proteins to the ClpC protease or to other proteins involved in proteolysis. Acts negatively in the development of competence by binding ComK and recruiting it to the ClpCP protease. When overexpressed, inhibits sporulation. Also involved in Spx degradation by ClpC. The sequence is that of Adapter protein MecA 1 (mecA1) from Halalkalibacterium halodurans (strain ATCC BAA-125 / DSM 18197 / FERM 7344 / JCM 9153 / C-125) (Bacillus halodurans).